The following is a 377-amino-acid chain: MIKTLVSPYSGFGSQKLKFDRSSEKVKTRAVRMELTITQPDDWHLHLRDGDLLHAVVPHSASNFKRAIVMPNLKPPVTSTAAAIIYRKFIMKALPSESSFDPLMTLYLTDKTLPEEIRLARESGVVYAVKLYPAGATTNSQDGVTDLFGKCLPVLEEMVKQNMPLLVHGEVTDPSIDVFDREKIFIETVLQPLIQRLPQLKVVMEHITTMDAVNFVESCKEGSVGATVTPQHLLLNRNALFQGGLQPHNYCLPVLKREIHREAIVKAVTSGSKKFFLGTDSAPHERSRKESSCGCAGIYSAPIALSLYAKVFDEAGALDKLEAFTSFNGPDFYGLPRNSSKITLKKSPWKVPDVFNFPFGEIVPMFAGETLQWQPLK.

Residues His44, His46, Lys130, His168, and His206 each coordinate Zn(2+). Lys130 is subject to N6-carboxylysine. The residue at position 223 (Ser223) is a Phosphoserine. Asp280 provides a ligand contact to Zn(2+).

Belongs to the metallo-dependent hydrolases superfamily. DHOase family. Class II DHOase subfamily. It depends on Zn(2+) as a cofactor.

The protein localises to the mitochondrion. The enzyme catalyses (S)-dihydroorotate + H2O = N-carbamoyl-L-aspartate + H(+). Its pathway is pyrimidine metabolism; UMP biosynthesis via de novo pathway; (S)-dihydroorotate from bicarbonate: step 3/3. This is Dihydroorotase, mitochondrial (PYR4) from Arabidopsis thaliana (Mouse-ear cress).